The following is a 97-amino-acid chain: Secreted transmembrane peptide 4 (97 aa).

A signal peptide spans 1–33 (MTKNMTKKKMGLMSPNIAAFVLPMLLVLFTISS). The SCOOP motif signature appears at 54–67 (IVFTPPSSSCGGSP). Residues 60-62 (SSS) carry the SxS motif essential for MIK2 binding motif. The tract at residues 75–97 (WMPRRPCRRTRPPGTNIPVSQSP) is disordered.

It belongs to the serine rich endogenous peptide (SCOOP) phytocytokine family. In terms of assembly, interacts with MIK2 (via extracellular leucine-rich repeat domain); this interaction triggers the formation of complex between MIK2 and the BAK1/SERK3 and SERK4 coreceptors, and subsequent BAK1 activation by phosphorylation. In terms of tissue distribution, mostly expressed in leaves and stems, and, to a lower extent, in roots, siliques, seeds and flowers.

It is found in the cell membrane. Its subcellular location is the secreted. The protein localises to the extracellular space. It localises to the apoplast. Brassicaceae-specific phytocytokine (plant endogenous peptide released into the apoplast) perceived by MIK2 in a BAK1/SERK3 and SERK4 coreceptors-dependent manner, that modulates various physiological and antimicrobial processes including growth prevention and reactive oxygen species (ROS) response regulation. Prevents general growth and development. This chain is Secreted transmembrane peptide 4, found in Arabidopsis thaliana (Mouse-ear cress).